Here is a 406-residue protein sequence, read N- to C-terminus: Cysteine desulfurase (406 aa).

Lys-226 carries the N6-(pyridoxal phosphate)lysine modification. The active-site Cysteine persulfide intermediate is Cys-364.

Belongs to the class-V pyridoxal-phosphate-dependent aminotransferase family. Csd subfamily. As to quaternary structure, homodimer. Interacts with SufE and the SufBCD complex composed of SufB, SufC and SufD. The interaction with SufE is required to mediate the direct transfer of the sulfur atom from the S-sulfanylcysteine. The cofactor is pyridoxal 5'-phosphate.

Its subcellular location is the cytoplasm. It carries out the reaction (sulfur carrier)-H + L-cysteine = (sulfur carrier)-SH + L-alanine. The catalysed reaction is L-selenocysteine + AH2 = hydrogenselenide + L-alanine + A + H(+). It participates in cofactor biosynthesis; iron-sulfur cluster biosynthesis. In terms of biological role, cysteine desulfurases mobilize the sulfur from L-cysteine to yield L-alanine, an essential step in sulfur metabolism for biosynthesis of a variety of sulfur-containing biomolecules. Component of the suf operon, which is activated and required under specific conditions such as oxidative stress and iron limitation. Acts as a potent selenocysteine lyase in vitro, that mobilizes selenium from L-selenocysteine. Selenocysteine lyase activity is however unsure in vivo. The protein is Cysteine desulfurase of Escherichia coli (strain SE11).